Here is a 346-residue protein sequence, read N- to C-terminus: GTPase Obg (346 aa).

One can recognise an Obg domain in the interval 1–159 (MRFVDRCRLK…RELRLELKVL (159 aa)). The tract at residues 122 to 147 (KGGRGNLHFKSPHDRAPRRAEPGEPG) is disordered. Basic and acidic residues predominate over residues 132 to 147 (SPHDRAPRRAEPGEPG). The OBG-type G domain occupies 160–336 (ADVGLLGFPN…LVRELAALAR (177 aa)). GTP contacts are provided by residues 166–173 (GFPNAGKS), 191–195 (FTTLT), 218–221 (DIPG), 288–291 (TKAD), and 317–319 (SAA). Residues S173 and T193 each contribute to the Mg(2+) site.

This sequence belongs to the TRAFAC class OBG-HflX-like GTPase superfamily. OBG GTPase family. As to quaternary structure, monomer. It depends on Mg(2+) as a cofactor.

It is found in the cytoplasm. In terms of biological role, an essential GTPase which binds GTP, GDP and possibly (p)ppGpp with moderate affinity, with high nucleotide exchange rates and a fairly low GTP hydrolysis rate. Plays a role in control of the cell cycle, stress response, ribosome biogenesis and in those bacteria that undergo differentiation, in morphogenesis control. This chain is GTPase Obg, found in Sorangium cellulosum (strain So ce56) (Polyangium cellulosum (strain So ce56)).